A 117-amino-acid polypeptide reads, in one-letter code: MSTKSSSIHGRNEVKMEGEKRKDVESESTHVTLNVKGQDEEGVKVFRVRRKARLLKLMEYYAKMRGIEWNTFRFLSDDGSRIREYHTADDMELKDGDQIDALLPQESGFGPSTVFRV.

The tract at residues 1-30 is disordered; it reads MSTKSSSIHGRNEVKMEGEKRKDVESESTH. The segment covering 10 to 28 has biased composition (basic and acidic residues); the sequence is GRNEVKMEGEKRKDVESES. In terms of domain architecture, Ubiquitin-like spans 31–108; sequence VTLNVKGQDE…IDALLPQESG (78 aa). Gly108 participates in a covalent cross-link: Glycyl lysine isopeptide (Gly-Lys) (interchain with K-? in acceptor proteins).

This sequence belongs to the ubiquitin family. SUMO subfamily. Interacts with SAE2, SCE1, SIZ1 and MMS21 Covalently attached to a number of proteins.

Its subcellular location is the nucleus. The protein localises to the cytoplasm. In terms of biological role, ubiquitin-like protein which can be covalently attached to target lysines as a monomer. Does not seem to be involved in protein degradation and may function as an antagonist of ubiquitin in the degradation process. The protein is Putative small ubiquitin-related modifier 6 (SUMO6) of Arabidopsis thaliana (Mouse-ear cress).